We begin with the raw amino-acid sequence, 59 residues long: UPF0434 protein Sbal_1685 (59 aa).

It belongs to the UPF0434 family.

This chain is UPF0434 protein Sbal_1685, found in Shewanella baltica (strain OS155 / ATCC BAA-1091).